The following is a 559-amino-acid chain: DNA ligase (559 aa).

Residue glutamate 247 participates in ATP binding. Residue lysine 249 is the N6-AMP-lysine intermediate of the active site. 6 residues coordinate ATP: arginine 254, arginine 269, glutamate 299, phenylalanine 339, arginine 414, and lysine 420.

It belongs to the ATP-dependent DNA ligase family. In terms of assembly, monomer. The cofactor is Mg(2+).

The enzyme catalyses ATP + (deoxyribonucleotide)n-3'-hydroxyl + 5'-phospho-(deoxyribonucleotide)m = (deoxyribonucleotide)n+m + AMP + diphosphate.. It catalyses the reaction NAD(+) + (deoxyribonucleotide)n-3'-hydroxyl + 5'-phospho-(deoxyribonucleotide)m = (deoxyribonucleotide)n+m + AMP + beta-nicotinamide D-nucleotide.. In terms of biological role, DNA ligase that seals nicks in double-stranded DNA during DNA replication, DNA recombination and DNA repair. Can also use NAD, but less efficiently than ATP. The polypeptide is DNA ligase (Thermococcus kodakarensis (strain ATCC BAA-918 / JCM 12380 / KOD1) (Pyrococcus kodakaraensis (strain KOD1))).